The chain runs to 904 residues: DNA mismatch repair protein MutS (904 aa).

Position 655 to 662 (655 to 662) interacts with ATP; that stretch reads GPNMGGKS.

Belongs to the DNA mismatch repair MutS family.

This protein is involved in the repair of mismatches in DNA. It is possible that it carries out the mismatch recognition step. This protein has a weak ATPase activity. This is DNA mismatch repair protein MutS from Rhizorhabdus wittichii (strain DSM 6014 / CCUG 31198 / JCM 15750 / NBRC 105917 / EY 4224 / RW1) (Sphingomonas wittichii).